Consider the following 341-residue polypeptide: Endolytic peptidoglycan transglycosylase RlpA (341 aa).

Residues 1–26 (MSKRVRSSLILPAVCGLGLAAVLLSS) form the signal peptide. A lipid anchor (N-palmitoyl cysteine) is attached at Cys-27. The S-diacylglycerol cysteine moiety is linked to residue Cys-27. Residues 260–341 (SLPADGLYLQ…LGQPTLVRPD (82 aa)) enclose the SPOR domain.

Belongs to the RlpA family.

It is found in the cell membrane. Its function is as follows. Lytic transglycosylase with a strong preference for naked glycan strands that lack stem peptides. Required for efficient separation of daughter cells and maintenance of rod shape. This Pseudomonas aeruginosa (strain UCBPP-PA14) protein is Endolytic peptidoglycan transglycosylase RlpA.